Reading from the N-terminus, the 455-residue chain is Bifunctional protein GlmU (455 aa).

Positions 1-225 are pyrophosphorylase; it reads MEVVILAAGQ…IWETLGVNSK (225 aa). UDP-N-acetyl-alpha-D-glucosamine is bound by residues 6-9, Lys-20, Gln-71, 76-77, 98-100, Gly-135, Glu-150, Asn-165, and Asn-223; these read LAAG, GT, and YGD. Asp-100 contributes to the Mg(2+) binding site. Asn-223 provides a ligand contact to Mg(2+). A linker region spans residues 226-246; sequence AQLAELERLHQRNIATRLMED. The N-acetyltransferase stretch occupies residues 247 to 455; it reads GVTLFDPSRI…KRPVKKKAGE (209 aa). UDP-N-acetyl-alpha-D-glucosamine contacts are provided by Arg-329 and Lys-347. His-359 (proton acceptor) is an active-site residue. UDP-N-acetyl-alpha-D-glucosamine is bound by residues Tyr-362 and Asn-373. Residues Ala-376, 382–383, Ser-401, Ala-419, and Arg-436 contribute to the acetyl-CoA site; that span reads NY.

This sequence in the N-terminal section; belongs to the N-acetylglucosamine-1-phosphate uridyltransferase family. The protein in the C-terminal section; belongs to the transferase hexapeptide repeat family. Homotrimer. Requires Mg(2+) as cofactor.

Its subcellular location is the cytoplasm. The catalysed reaction is alpha-D-glucosamine 1-phosphate + acetyl-CoA = N-acetyl-alpha-D-glucosamine 1-phosphate + CoA + H(+). It carries out the reaction N-acetyl-alpha-D-glucosamine 1-phosphate + UTP + H(+) = UDP-N-acetyl-alpha-D-glucosamine + diphosphate. It participates in nucleotide-sugar biosynthesis; UDP-N-acetyl-alpha-D-glucosamine biosynthesis; N-acetyl-alpha-D-glucosamine 1-phosphate from alpha-D-glucosamine 6-phosphate (route II): step 2/2. The protein operates within nucleotide-sugar biosynthesis; UDP-N-acetyl-alpha-D-glucosamine biosynthesis; UDP-N-acetyl-alpha-D-glucosamine from N-acetyl-alpha-D-glucosamine 1-phosphate: step 1/1. It functions in the pathway bacterial outer membrane biogenesis; LPS lipid A biosynthesis. Its function is as follows. Catalyzes the last two sequential reactions in the de novo biosynthetic pathway for UDP-N-acetylglucosamine (UDP-GlcNAc). The C-terminal domain catalyzes the transfer of acetyl group from acetyl coenzyme A to glucosamine-1-phosphate (GlcN-1-P) to produce N-acetylglucosamine-1-phosphate (GlcNAc-1-P), which is converted into UDP-GlcNAc by the transfer of uridine 5-monophosphate (from uridine 5-triphosphate), a reaction catalyzed by the N-terminal domain. The sequence is that of Bifunctional protein GlmU from Aromatoleum aromaticum (strain DSM 19018 / LMG 30748 / EbN1) (Azoarcus sp. (strain EbN1)).